Reading from the N-terminus, the 445-residue chain is Response regulator protein PilR (445 aa).

Residues 5–119 (KALIVDDEPD…RLRELVATAL (115 aa)) enclose the Response regulatory domain. Residues Asp-11 and Asp-54 each carry the 4-aspartylphosphate modification. Positions 135 to 364 (LLGESPPMRA…LENMLERAYT (230 aa)) constitute a Sigma-54 factor interaction domain. ATP is bound by residues 163-170 (GESGSGKE) and 226-235 (ASGGTLFLDE). Residues 418 to 437 (RWNRTAAAQRLGLTFRSMRY) constitute a DNA-binding region (H-T-H motif).

Phosphorylated by PilS.

It is found in the cytoplasm. Functionally, member of the two-component regulatory system PilS/PilR that regulates the expression of multiple genes including the type IV pilus (T4P) major subunit PilA. Thereby, plays a major role in the regulation of multiple motility pathways. Upon appropriate environmental signals, the histidine kinase PilS transfers the phosphoryl group onto PilR. In turn, PilR functions as a transcriptional activator by direct binding to a cis-acting sequence upstream of the pilin gene promoter leading to its activation. The protein is Response regulator protein PilR (pilR) of Pseudomonas aeruginosa (strain ATCC 15692 / DSM 22644 / CIP 104116 / JCM 14847 / LMG 12228 / 1C / PRS 101 / PAO1).